We begin with the raw amino-acid sequence, 647 residues long: DNA mismatch repair protein MutL (647 aa).

The protein belongs to the DNA mismatch repair MutL/HexB family.

Its function is as follows. This protein is involved in the repair of mismatches in DNA. It is required for dam-dependent methyl-directed DNA mismatch repair. May act as a 'molecular matchmaker', a protein that promotes the formation of a stable complex between two or more DNA-binding proteins in an ATP-dependent manner without itself being part of a final effector complex. The protein is DNA mismatch repair protein MutL of Bacillus cereus (strain 03BB102).